A 754-amino-acid polypeptide reads, in one-letter code: ToMV susceptible protein tm-1(GCR26) (754 aa).

Residues 1–201 (MATAQSNSPR…AGMVIGRLES (201 aa)) are N-terminal inhibitory domain NN. Residues 18–20 (DTK), Thr55, Arg92, and 124–127 (GSGG) contribute to the ATP site. The interval 211 to 431 (KFTVGVTMFG…VDSFLEMSPK (221 aa)) is N-terminal inhibitory domain NC.

The protein belongs to the UPF0261 family. As to quaternary structure, homodimer. In terms of assembly, (Microbial infection) Binds, via an ATP bridge, to the tobamoviruses avirulent (Avr) replication proteins (large and small subunits, e.g. tobacco mild green mosaic virus (TMGMV) AC P18339 and pepper mild mottle virus (PMMoV) AC P89657) to inhibit their function after the translation of tobamoviruses RNA, but before the viral replication complex formation on the membrane surfaces; this interaction is not possible with resistance-breaking strains replication proteins.

Its function is as follows. Inhibitor of viral RNA replication which confers resistance to some tobamoviruses including tobacco mild green mosaic virus (TMGMV) and pepper mild mottle virus (PMMoV), but not to tomato mosaic virus (ToMV strains L, ToMV0 and ToMV1-2) and tobacco mosaic virus (TMV). Prevents tobamoviruses RNA replication by affecting the association of tobamoviruses replication proteins (large and small subunits) with host membrane-associated proteins (e.g. TOM1, TOM2A and ARL8), thus inhibiting the replication complex formation on the membranes and avoiding viral negative-strand RNA synthesis. This chain is ToMV susceptible protein tm-1(GCR26), found in Solanum lycopersicum (Tomato).